Reading from the N-terminus, the 338-residue chain is NADPH dehydrogenase (338 aa).

Ser22–Cys25 is an FMN binding site. Tyr27 lines the substrate pocket. 2 residues coordinate FMN: Ala59 and Gln101. His163–His166 is a substrate binding site. Residues Arg214 and Gly306–Arg307 contribute to the FMN site.

Belongs to the NADH:flavin oxidoreductase/NADH oxidase family. NamA subfamily. In terms of assembly, homotetramer. FMN is required as a cofactor.

The enzyme catalyses A + NADPH + H(+) = AH2 + NADP(+). Its function is as follows. Catalyzes the reduction of the double bond of an array of alpha,beta-unsaturated aldehydes and ketones. It also reduces the nitro group of nitroester and nitroaromatic compounds. It could have a role in detoxification processes. This chain is NADPH dehydrogenase, found in Listeria welshimeri serovar 6b (strain ATCC 35897 / DSM 20650 / CCUG 15529 / CIP 8149 / NCTC 11857 / SLCC 5334 / V8).